Here is a 198-residue protein sequence, read N- to C-terminus: NADH-quinone oxidoreductase subunit B (198 aa).

Over residues 1-20 the composition is skewed to polar residues; it reads MGLNPTQVSTSGSPQVSQPA. The interval 1 to 29 is disordered; sequence MGLNPTQVSTSGSPQVSQPATGVLDPRTG. 4 residues coordinate [4Fe-4S] cluster: C77, C78, C142, and C172.

It belongs to the complex I 20 kDa subunit family. NDH-1 is composed of 14 different subunits. Subunits NuoB, C, D, E, F, and G constitute the peripheral sector of the complex. [4Fe-4S] cluster serves as cofactor.

Its subcellular location is the cell inner membrane. The catalysed reaction is a quinone + NADH + 5 H(+)(in) = a quinol + NAD(+) + 4 H(+)(out). NDH-1 shuttles electrons from NADH, via FMN and iron-sulfur (Fe-S) centers, to quinones in the respiratory chain. The immediate electron acceptor for the enzyme in this species is believed to be ubiquinone. Couples the redox reaction to proton translocation (for every two electrons transferred, four hydrogen ions are translocated across the cytoplasmic membrane), and thus conserves the redox energy in a proton gradient. This Afipia carboxidovorans (strain ATCC 49405 / DSM 1227 / KCTC 32145 / OM5) (Oligotropha carboxidovorans) protein is NADH-quinone oxidoreductase subunit B.